Here is a 590-residue protein sequence, read N- to C-terminus: Glutamine--fructose-6-phosphate aminotransferase [isomerizing] (590 aa).

The active-site Nucleophile; for GATase activity is the cysteine 2. In terms of domain architecture, Glutamine amidotransferase type-2 spans 2–221 (CGIIGIVSSK…DGELGFITTS (220 aa)). SIS domains are found at residues 286–422 (IIAE…DNTN) and 445–580 (IGEE…PDKP). Residue lysine 585 is the For Fru-6P isomerization activity of the active site.

In terms of assembly, homodimer.

Its subcellular location is the cytoplasm. The catalysed reaction is D-fructose 6-phosphate + L-glutamine = D-glucosamine 6-phosphate + L-glutamate. Catalyzes the first step in hexosamine metabolism, converting fructose-6P into glucosamine-6P using glutamine as a nitrogen source. The chain is Glutamine--fructose-6-phosphate aminotransferase [isomerizing] from Sulfolobus acidocaldarius (strain ATCC 33909 / DSM 639 / JCM 8929 / NBRC 15157 / NCIMB 11770).